Consider the following 363-residue polypeptide: Peptide chain release factor 2 (363 aa).

Gln251 carries the post-translational modification N5-methylglutamine.

This sequence belongs to the prokaryotic/mitochondrial release factor family. In terms of processing, methylated by PrmC. Methylation increases the termination efficiency of RF2.

The protein localises to the cytoplasm. Peptide chain release factor 2 directs the termination of translation in response to the peptide chain termination codons UGA and UAA. This chain is Peptide chain release factor 2, found in Helicobacter pylori (strain HPAG1).